Reading from the N-terminus, the 177-residue chain is Large ribosomal subunit protein uL6 (177 aa).

Residues 152 to 171 (RPPEPYKGKGVRYDDEEVRR) are compositionally biased toward basic and acidic residues. The disordered stretch occupies residues 152–177 (RPPEPYKGKGVRYDDEEVRRKEAKKK).

The protein belongs to the universal ribosomal protein uL6 family. In terms of assembly, part of the 50S ribosomal subunit.

This protein binds to the 23S rRNA, and is important in its secondary structure. It is located near the subunit interface in the base of the L7/L12 stalk, and near the tRNA binding site of the peptidyltransferase center. The polypeptide is Large ribosomal subunit protein uL6 (Shewanella sp. (strain MR-4)).